The chain runs to 587 residues: Glutamine--tRNA ligase (587 aa).

Positions 58-68 (PEPNGYLHIGH) match the 'HIGH' region motif. ATP contacts are provided by residues 59-61 (EPN) and 65-71 (HIGHAKS). Positions 91 and 240 each coordinate L-glutamine. Residues threonine 259 and 294–295 (RL) contribute to the ATP site. The 'KMSKS' region signature appears at 301 to 305 (VTSKR).

Belongs to the class-I aminoacyl-tRNA synthetase family. Monomer.

Its subcellular location is the cytoplasm. The catalysed reaction is tRNA(Gln) + L-glutamine + ATP = L-glutaminyl-tRNA(Gln) + AMP + diphosphate. In Bordetella bronchiseptica (strain ATCC BAA-588 / NCTC 13252 / RB50) (Alcaligenes bronchisepticus), this protein is Glutamine--tRNA ligase.